The sequence spans 80 residues: MPKKNEQPASFETALTELEQIVTRLESGDLPLEEALNEFERGVQLARQGQVKLQQAEQRVQILLSQNEDAPLTPFTPDAE.

Belongs to the XseB family. In terms of assembly, heterooligomer composed of large and small subunits.

Its subcellular location is the cytoplasm. It catalyses the reaction Exonucleolytic cleavage in either 5'- to 3'- or 3'- to 5'-direction to yield nucleoside 5'-phosphates.. Bidirectionally degrades single-stranded DNA into large acid-insoluble oligonucleotides, which are then degraded further into small acid-soluble oligonucleotides. The polypeptide is Exodeoxyribonuclease 7 small subunit (Cronobacter sakazakii (strain ATCC BAA-894) (Enterobacter sakazakii)).